Reading from the N-terminus, the 398-residue chain is Lipase member K (398 aa).

The first 19 residues, 1-19, serve as a signal peptide directing secretion; that stretch reads MWWLLATTCCVLLSGPIDG. Residues 78 to 377 form the AB hydrolase-1 domain; sequence VVYLQHGLIA…HYNHMDFYLG (300 aa). S171 (nucleophile) is an active-site residue. Cysteines 245 and 254 form a disulfide. N270 and N326 each carry an N-linked (GlcNAc...) asparagine glycan. Active-site charge relay system residues include D342 and H371.

It belongs to the AB hydrolase superfamily. Lipase family.

It is found in the secreted. Plays a highly specific role in the last step of keratinocyte differentiation. May have an essential function in lipid metabolism of the most differentiated epidermal layers. The chain is Lipase member K (Lipk) from Mus musculus (Mouse).